A 155-amino-acid chain; its full sequence is Ribonuclease H (155 aa).

The 142-residue stretch at 1-142 folds into the RNase H type-1 domain; that stretch reads MLKQVEIFTD…CDELARAAAS (142 aa). The Mg(2+) site is built by aspartate 10, glutamate 48, aspartate 70, and aspartate 134.

It belongs to the RNase H family. In terms of assembly, monomer. Mg(2+) serves as cofactor.

It localises to the cytoplasm. It catalyses the reaction Endonucleolytic cleavage to 5'-phosphomonoester.. Functionally, endonuclease that specifically degrades the RNA of RNA-DNA hybrids. In Klebsiella pneumoniae (strain 342), this protein is Ribonuclease H.